The chain runs to 112 residues: Large ribosomal subunit protein uL18 (112 aa).

The protein belongs to the universal ribosomal protein uL18 family. In terms of assembly, part of the 50S ribosomal subunit; part of the 5S rRNA/L5/L18/L25 subcomplex. Contacts the 5S and 23S rRNAs.

Functionally, this is one of the proteins that bind and probably mediate the attachment of the 5S RNA into the large ribosomal subunit, where it forms part of the central protuberance. This is Large ribosomal subunit protein uL18 from Thermus thermophilus (strain ATCC BAA-163 / DSM 7039 / HB27).